The sequence spans 565 residues: Oxygen-dependent choline dehydrogenase (565 aa).

6 to 35 provides a ligand contact to FAD; the sequence is DYIIVGAGSAGNTLATRLTEDAGVTVLLLE. The active-site Proton acceptor is the His-475.

Belongs to the GMC oxidoreductase family. The cofactor is FAD.

The catalysed reaction is choline + A = betaine aldehyde + AH2. It carries out the reaction betaine aldehyde + NAD(+) + H2O = glycine betaine + NADH + 2 H(+). Its pathway is amine and polyamine biosynthesis; betaine biosynthesis via choline pathway; betaine aldehyde from choline (cytochrome c reductase route): step 1/1. In terms of biological role, involved in the biosynthesis of the osmoprotectant glycine betaine. Catalyzes the oxidation of choline to betaine aldehyde and betaine aldehyde to glycine betaine at the same rate. The polypeptide is Oxygen-dependent choline dehydrogenase (Pseudomonas putida (strain GB-1)).